An 878-amino-acid chain; its full sequence is Alanine--tRNA ligase (878 aa).

Zn(2+) is bound by residues histidine 567, histidine 571, cysteine 669, and histidine 673. Residues 841–860 (AVGGKGGGRPDMAEAGGKDP) form a disordered region.

It belongs to the class-II aminoacyl-tRNA synthetase family. It depends on Zn(2+) as a cofactor.

It is found in the cytoplasm. It catalyses the reaction tRNA(Ala) + L-alanine + ATP = L-alanyl-tRNA(Ala) + AMP + diphosphate. Functionally, catalyzes the attachment of alanine to tRNA(Ala) in a two-step reaction: alanine is first activated by ATP to form Ala-AMP and then transferred to the acceptor end of tRNA(Ala). Also edits incorrectly charged Ser-tRNA(Ala) and Gly-tRNA(Ala) via its editing domain. This is Alanine--tRNA ligase from Solibacter usitatus (strain Ellin6076).